Consider the following 302-residue polypeptide: Probable 2-(5''-triphosphoribosyl)-3'-dephosphocoenzyme-A synthase 1 (302 aa).

It belongs to the CitG/MdcB family.

The enzyme catalyses 3'-dephospho-CoA + ATP = 2'-(5''-triphospho-alpha-D-ribosyl)-3'-dephospho-CoA + adenine. The chain is Probable 2-(5''-triphosphoribosyl)-3'-dephosphocoenzyme-A synthase 1 from Salmonella typhimurium (strain LT2 / SGSC1412 / ATCC 700720).